A 244-amino-acid chain; its full sequence is MNNSLSPKAIRELREETCNPLGAPQVTTDLSENIIMTSLDDLHNWARLSSLWPLLYGTACCFIEFAALIGSRFDFDRFGLVPRSSPRQADLLIVAGTVTMKMAPALVRLYEQMPEPKYVIAMGACTITGGMFSADSTTAVRGVDKLIPVDLYLPGCPPRPEAIFDAVIKLRKKVANESILERNKSEQTHRYLTVDHEMNLVFSENTGEYLNKKSEKSIESSKLNPVEESSENIYETNSIDEVIK.

Cys-60, Cys-61, Cys-125, and Cys-156 together coordinate [4Fe-4S] cluster. A disordered region spans residues Lys-213–Lys-244. Over residues Glu-231–Lys-244 the composition is skewed to polar residues.

This sequence belongs to the complex I 20 kDa subunit family. In terms of assembly, NDH-1 can be composed of about 15 different subunits; different subcomplexes with different compositions have been identified which probably have different functions. Requires [4Fe-4S] cluster as cofactor.

The protein resides in the cellular thylakoid membrane. The catalysed reaction is a plastoquinone + NADH + (n+1) H(+)(in) = a plastoquinol + NAD(+) + n H(+)(out). It carries out the reaction a plastoquinone + NADPH + (n+1) H(+)(in) = a plastoquinol + NADP(+) + n H(+)(out). Functionally, NDH-1 shuttles electrons from an unknown electron donor, via FMN and iron-sulfur (Fe-S) centers, to quinones in the respiratory and/or the photosynthetic chain. The immediate electron acceptor for the enzyme in this species is believed to be plastoquinone. Couples the redox reaction to proton translocation, and thus conserves the redox energy in a proton gradient. Cyanobacterial NDH-1 also plays a role in inorganic carbon-concentration. This is NAD(P)H-quinone oxidoreductase subunit K from Prochlorococcus marinus subsp. pastoris (strain CCMP1986 / NIES-2087 / MED4).